The chain runs to 403 residues: Serine/threonine-protein phosphatase 4 regulatory subunit 2-A (403 aa).

Polar residues-rich tracts occupy residues 140 to 149, 156 to 170, and 183 to 196; these read EKNNSTSLNR, PSNSQSYTDRSNVNG, and SLSSPMNTNGLPDS. The interval 140-403 is disordered; it reads EKNNSTSLNR…DAPEEPMEQD (264 aa). Over residues 197–211 the composition is skewed to basic and acidic residues; it reads TENKESDLQQKEKSQ. 2 stretches are compositionally biased toward polar residues: residues 212–226 and 371–387; these read SDSAVSDDGSQATTS and ATSSGKSTETLTLSPME. Acidic residues predominate over residues 388–403; the sequence is NSEEATDAPEEPMEQD.

It belongs to the PPP4R2 family. Serine/threonine-protein phosphatase 4 (PP4) occurs in different assemblies of the catalytic and one or more regulatory subunits.

Regulatory subunit of serine/threonine-protein phosphatase 4 (PP4). The polypeptide is Serine/threonine-protein phosphatase 4 regulatory subunit 2-A (ppp4r2-a) (Xenopus laevis (African clawed frog)).